A 65-amino-acid polypeptide reads, in one-letter code: Large ribosomal subunit protein bL35 (65 aa).

The protein belongs to the bacterial ribosomal protein bL35 family.

In Borrelia turicatae (strain 91E135), this protein is Large ribosomal subunit protein bL35.